We begin with the raw amino-acid sequence, 24 residues long: Humanin-like 12 (24 aa).

It belongs to the humanin family.

Its subcellular location is the secreted. The protein localises to the cytoplasm. Functionally, plays a role as a neuroprotective and antiapoptotic factor. This Homo sapiens (Human) protein is Humanin-like 12.